The sequence spans 356 residues: uncharacterized protein (356 aa).

Positions 1–21 (MKLITAPCRALLALPFCYAFS) are cleaved as a signal peptide.

This is an uncharacterized protein from Escherichia coli (strain K12).